A 339-amino-acid chain; its full sequence is MFYKIAQKFMFQMDPELAHNFAIGSLKSTGNSPLNCFYAQKIKPAPVTMMGLTFPNPVGLAAGMDKDGECIDAFHAMGFGHVEVGTVTPRPQPGNEQPRLFRLKPAKAIINRMGFNNKGVDSLVENLKAVKSDAMVGVNIGKNKDTPVELGKDDYLICMDKVYQYAAYIAVNISSPNTPGLRSLQYGDLLDDLLGSLKQKQKDLTEKHGKYVPIALKIAPDLSSEEIEKIADSLIRNEFDAAIATNTTLTRDGVSGLLNANEAGGLSGKPLNSLSTIVIKQLADCLKGQIPIIGVGGINTAADALDKIDAGAQMVQIYSGFIYQGPQLIKDIIEAYRIK.

FMN-binding positions include A62–K66 and T86. Position 66 (K66) interacts with substrate. N111–F115 is a substrate binding site. FMN is bound by residues N139 and N172. N172 is a substrate binding site. The active-site Nucleophile is S175. N177 is a binding site for substrate. Residues K217 and T245 each coordinate FMN. N246 to T247 provides a ligand contact to substrate. Residues G268, G297, and Y318–S319 contribute to the FMN site.

This sequence belongs to the dihydroorotate dehydrogenase family. Type 2 subfamily. In terms of assembly, monomer. The cofactor is FMN.

It localises to the cell membrane. The catalysed reaction is (S)-dihydroorotate + a quinone = orotate + a quinol. It participates in pyrimidine metabolism; UMP biosynthesis via de novo pathway; orotate from (S)-dihydroorotate (quinone route): step 1/1. In terms of biological role, catalyzes the conversion of dihydroorotate to orotate with quinone as electron acceptor. This chain is Dihydroorotate dehydrogenase (quinone), found in Shewanella piezotolerans (strain WP3 / JCM 13877).